Here is a 563-residue protein sequence, read N- to C-terminus: RUN and FYVE domain-containing protein 4 (563 aa).

An RUN domain is found at 33-166 (TETSAELHRL…VAFNLDLQRP (134 aa)). 2 disordered regions span residues 176–327 (SESR…TTEG) and 375–397 (KKSS…MQED). Composition is skewed to basic and acidic residues over residues 196–205 (GFPEEVRCSR) and 263–284 (ETER…RKFL). Positions 285-295 (ENSTASIQQQR) are enriched in polar residues. Basic and acidic residues predominate over residues 297–312 (RAKDVKMQLTGRKVEG). The span at 385–396 (EWTGVTSGTMQE) shows a compositional bias: polar residues. Residues 421–462 (QAQCQEQLRAQEAELQALQEQLSRCQKERALLQVKLEQKQQE) are a coiled coil. The FYVE-type zinc finger occupies 428 to 558 (LRAQEAELQA…RCCPTCAQQE (131 aa)). Zn(2+)-binding residues include Cys-513, Cys-516, Cys-529, Cys-532, Cys-537, Cys-540, Cys-551, and Cys-554.

In terms of assembly, forms homodimers (via coiled coil domain). Forms a ternary complex with RAB7A and LAMP2; the interaction with RAB7A is mediated by RUFY4 (via RUN and coiled coil domains). Interacts with GTP-, but not GDP-bound ARL8A and ARL8B. Interacts with dynactin/DCTN1 and the dynein intermediate chain DYNC1I1/2. In terms of tissue distribution, expressed in dendritic cells.

Its subcellular location is the cytoplasmic vesicle. It localises to the autophagosome. The protein resides in the lysosome. In terms of biological role, ARL8 effector that promotes the coupling of endolysosomes to dynein-dynactin for retrograde transport along microtubules. Acts by binding both GTP-bound ARL8 and dynein-dynactin. In nonneuronal cells, promotes concentration of endolysosomes in the juxtanuclear area. In hippocampal neurons, drives retrograde transport of endolysosomes from the axon to the soma. Positive regulator of macroautophagy in dendritic cells. Increases autophagic flux, probably by stimulating both autophagosome formation and facilitating tethering with lysosomes. Binds to phosphatidylinositol 3-phosphate (PtdIns3P) through its FYVE-type zinc finger. Positive regulator of osteosclast bone-resorbing activity, possibly by promoting late endosome-lysosome fusion by acting as an adapter protein between RAB7A on late endosomes and LAMP2 on primary lysosomes. The sequence is that of RUN and FYVE domain-containing protein 4 (Rufy4) from Mus musculus (Mouse).